A 139-amino-acid chain; its full sequence is Galactoside-binding soluble lectin 13 (139 aa).

The Galectin domain occupies 6–138 (VPYKLPVSLS…DISLTSVCVC (133 aa)).

Homodimer; disulfide-linked. Detected in adult and fetal spleen, fetal kidney, adult urinary bladder and placenta. Placental expression originates predominantly from the syncytiotrophoblast.

The protein localises to the cytoplasm. The protein resides in the nucleus matrix. Binds beta-galactoside and lactose. Strong inducer of T-cell apoptosis. Has hemagglutinating activity towards chicken erythrocytes. The polypeptide is Galactoside-binding soluble lectin 13 (LGALS13) (Homo sapiens (Human)).